Here is a 359-residue protein sequence, read N- to C-terminus: DNA replication and repair protein RecF (359 aa).

30 to 37 contributes to the ATP binding site; that stretch reads GPNGSGKT.

It belongs to the RecF family.

The protein resides in the cytoplasm. In terms of biological role, the RecF protein is involved in DNA metabolism; it is required for DNA replication and normal SOS inducibility. RecF binds preferentially to single-stranded, linear DNA. It also seems to bind ATP. This chain is DNA replication and repair protein RecF, found in Vibrio parahaemolyticus serotype O3:K6 (strain RIMD 2210633).